The sequence spans 391 residues: Phosphoglycerate kinase (391 aa).

Residues 21-23, Arg-36, 59-62, Arg-114, and Arg-147 each bind substrate; these read DLN and HLGR. Residues Lys-198, Glu-315, and 344–347 each bind ATP; that span reads GGDT.

It belongs to the phosphoglycerate kinase family. Monomer.

The protein localises to the cytoplasm. It carries out the reaction (2R)-3-phosphoglycerate + ATP = (2R)-3-phospho-glyceroyl phosphate + ADP. It functions in the pathway carbohydrate degradation; glycolysis; pyruvate from D-glyceraldehyde 3-phosphate: step 2/5. In Actinobacillus succinogenes (strain ATCC 55618 / DSM 22257 / CCUG 43843 / 130Z), this protein is Phosphoglycerate kinase.